We begin with the raw amino-acid sequence, 314 residues long: Lipid A biosynthesis acyltransferase 2 (314 aa).

A helical transmembrane segment spans residues 17–37 (LSPVYWFTWFVLGMIAGISMF). The short motif at 137-142 (HGWSVD) is the HXXXXD motif element.

Belongs to the LpxL/LpxM/LpxP family. LpxM subfamily.

The protein localises to the cell inner membrane. The enzyme catalyses an alpha-Kdo-(2-&gt;4)-alpha-Kdo-(2-&gt;6)-(acyl)-lipid IVA + a fatty acyl-[ACP] = an alpha-Kdo-(2-&gt;4)-alpha-Kdo-(2-&gt;6)-lipid A + holo-[ACP]. The protein operates within glycolipid biosynthesis; KDO(2)-lipid A biosynthesis; KDO(2)-lipid A from CMP-3-deoxy-D-manno-octulosonate and lipid IV(A): step 4/4. It participates in bacterial outer membrane biogenesis; lipopolysaccharide biosynthesis. Catalyzes the transfer of an acyl chain from an acyl-[acyl-carrier-protein] (ACP) to a Kdo(2)-(acyl)-lipid IV(A) to form a Kdo(2)-lipid A. The sequence is that of Lipid A biosynthesis acyltransferase 2 from Shigella flexneri.